We begin with the raw amino-acid sequence, 206 residues long: MSSSLSQTSKYQATSVVNGLLSNLLPGVPKIRANNGKTSVNNGSKAQLIDRNLKKRVQLQNRDVHKIKKKCKLVKKKKVKKHKLDKEQLEQLAKHQVLKKHQQEGTLTDHERKYLNKLIKRNSQNLRSWDLEEEVRDELEDIQQSILKDTVSTANTDRSKRRRFKRKQFKEDIKGSDFVKDHRYPGLTPGLAPVGLSDEEDSSEED.

A disordered region spans residues 178 to 206 (FVKDHRYPGLTPGLAPVGLSDEEDSSEED). Ser197, Ser202, and Ser203 each carry phosphoserine. Residues 197-206 (SDEEDSSEED) show a composition bias toward acidic residues.

This sequence belongs to the RRT14 family.

It localises to the nucleus. The protein localises to the nucleolus. Functionally, involved in ribosome biogenesis, probably through modulation of rDNA transcription. The protein is Regulator of rDNA transcription 14 (RRT14) of Saccharomyces cerevisiae (strain AWRI1631) (Baker's yeast).